A 290-amino-acid polypeptide reads, in one-letter code: ATP synthase gamma chain (290 aa).

Belongs to the ATPase gamma chain family. F-type ATPases have 2 components, CF(1) - the catalytic core - and CF(0) - the membrane proton channel. CF(1) has five subunits: alpha(3), beta(3), gamma(1), delta(1), epsilon(1). CF(0) has three main subunits: a, b and c.

It is found in the cell inner membrane. Its function is as follows. Produces ATP from ADP in the presence of a proton gradient across the membrane. The gamma chain is believed to be important in regulating ATPase activity and the flow of protons through the CF(0) complex. In Anaeromyxobacter sp. (strain K), this protein is ATP synthase gamma chain.